Reading from the N-terminus, the 184-residue chain is Tumor necrosis factor alpha-induced protein 8-like protein 2 (184 aa).

The protein belongs to the TNFAIP8 family. TNFAIP8L2 subfamily. As to quaternary structure, may interact with CASP8; however, such result is unclear since could not reproduce the interaction with CASP8. Interacts with RAC1. Ubiquitinated in a BTRC-depdent manner; leading to degradation mediated through the proteasome pathway.

The protein resides in the cytoplasm. Its subcellular location is the nucleus. It is found in the lysosome. In terms of biological role, acts as a negative regulator of innate and adaptive immunity by maintaining immune homeostasis. Plays a regulatory role in the Toll-like signaling pathway by determining the strength of LPS-induced signaling and gene expression. Inhibits TCR-mediated T-cell activation and negatively regulate T-cell function to prevent hyperresponsiveness. Also inhibits autolysosome formation via negatively modulating MTOR activation by interacting with RAC1 and promoting the disassociation of the RAC1-MTOR complex. Plays an essential role in NK-cell biology by acting as a checkpoint and displaying an expression pattern correlating with NK-cell maturation process and by negatively regulating NK-cell maturation and antitumor immunity. Mechanistically, suppresses IL-15-triggered mTOR activity in NK-cells. The protein is Tumor necrosis factor alpha-induced protein 8-like protein 2 (TNFAIP8L2) of Rhinolophus ferrumequinum (Greater horseshoe bat).